The following is a 548-amino-acid chain: CTP synthase (548 aa).

The amidoligase domain stretch occupies residues 1–267 (MKTKFIFITG…DQKIAIMLQL (267 aa)). CTP is bound at residue S14. Position 14 (S14) interacts with UTP. ATP-binding positions include 15–20 (SLGKGL) and D72. Mg(2+) is bound by residues D72 and E141. CTP-binding positions include 148–150 (DIE), 188–193 (KTKPTQ), and K224. Residues 188 to 193 (KTKPTQ) and K224 each bind UTP. The 254-residue stretch at 292-545 (TIGIVGKYVD…IKAAGKQAVK (254 aa)) folds into the Glutamine amidotransferase type-1 domain. G354 contacts L-glutamine. Catalysis depends on C381, which acts as the Nucleophile; for glutamine hydrolysis. L-glutamine-binding positions include 382–385 (LGMQ), E405, and R473. Residues H518 and E520 contribute to the active site.

The protein belongs to the CTP synthase family. Homotetramer.

The catalysed reaction is UTP + L-glutamine + ATP + H2O = CTP + L-glutamate + ADP + phosphate + 2 H(+). The enzyme catalyses L-glutamine + H2O = L-glutamate + NH4(+). It catalyses the reaction UTP + NH4(+) + ATP = CTP + ADP + phosphate + 2 H(+). Its pathway is pyrimidine metabolism; CTP biosynthesis via de novo pathway; CTP from UDP: step 2/2. With respect to regulation, allosterically activated by GTP, when glutamine is the substrate; GTP has no effect on the reaction when ammonia is the substrate. The allosteric effector GTP functions by stabilizing the protein conformation that binds the tetrahedral intermediate(s) formed during glutamine hydrolysis. Inhibited by the product CTP, via allosteric rather than competitive inhibition. Its function is as follows. Catalyzes the ATP-dependent amination of UTP to CTP with either L-glutamine or ammonia as the source of nitrogen. Regulates intracellular CTP levels through interactions with the four ribonucleotide triphosphates. The polypeptide is CTP synthase (Oleidesulfovibrio alaskensis (strain ATCC BAA-1058 / DSM 17464 / G20) (Desulfovibrio alaskensis)).